The sequence spans 354 residues: MTTVIQRRSTSNVWEQFCEWVTSTDNRLYIGWFGVLMIPTLLTATTCFIIAFIGAPPVDIDGIREPVSGSLLYGNNIISGAVVPSSAAIGLHFYPIWEAASLDEWLYNGGPYQLIVLHFLIGVFCYMGREWELSYRLGMRPWIAVAYSAPVAAATAVFLIYPIGQGSFSDGMPLGISGTFNFMLVFQAEHNILMHPFHQLGVAGVFGGALFSAMHGSLVTSSLIRETSEEESQNLGYKFGQEEETYNIVAAHGYFGRLIFQYASFNNSRSLHFFLAAWPVIGIWFTALGISIMAFNLNGFNFNQSIVDSNGRVVGTWADVLNRANLGMEVMHERNAHNFPLDLAAVEVAPAVRG.

A run of 3 helical transmembrane segments spans residues 29 to 46 (YIGWFGVLMIPTLLTATT), 118 to 133 (HFLIGVFCYMGREWEL), and 142 to 156 (WIAVAYSAPVAAATA). Histidine 118 is a chlorophyll a binding site. Tyrosine 126 contributes to the pheophytin a binding site. The [CaMn4O5] cluster site is built by aspartate 170 and glutamate 189. A helical transmembrane segment spans residues 197–218 (FHQLGVAGVFGGALFSAMHGSL). Histidine 198 is a chlorophyll a binding site. Residues histidine 215 and 264–265 (SF) contribute to the a quinone site. Fe cation is bound at residue histidine 215. A Fe cation-binding site is contributed by histidine 272. A helical membrane pass occupies residues 274 to 288 (FLAAWPVIGIWFTAL). [CaMn4O5] cluster contacts are provided by histidine 332, glutamate 333, aspartate 342, and alanine 344. Residues 345 to 354 (AVEVAPAVRG) constitute a propeptide that is removed on maturation.

Belongs to the reaction center PufL/M/PsbA/D family. As to quaternary structure, PSII is composed of 1 copy each of membrane proteins PsbA, PsbB, PsbC, PsbD, PsbE, PsbF, PsbH, PsbI, PsbJ, PsbK, PsbL, PsbM, PsbT, PsbX, PsbY, PsbZ, Psb30/Ycf12, peripheral proteins PsbO, CyanoQ (PsbQ), PsbU, PsbV and a large number of cofactors. It forms dimeric complexes. Requires The D1/D2 heterodimer binds P680, chlorophylls that are the primary electron donor of PSII, and subsequent electron acceptors. It shares a non-heme iron and each subunit binds pheophytin, quinone, additional chlorophylls, carotenoids and lipids. D1 provides most of the ligands for the Mn4-Ca-O5 cluster of the oxygen-evolving complex (OEC). There is also a Cl(-1) ion associated with D1 and D2, which is required for oxygen evolution. The PSII complex binds additional chlorophylls, carotenoids and specific lipids. as cofactor. Post-translationally, tyr-161 forms a radical intermediate that is referred to as redox-active TyrZ, YZ or Y-Z. In terms of processing, C-terminally processed by CtpA; processing is essential to allow assembly of the oxygen-evolving complex and thus photosynthetic growth.

The protein resides in the cellular thylakoid membrane. The catalysed reaction is 2 a plastoquinone + 4 hnu + 2 H2O = 2 a plastoquinol + O2. Photosystem II (PSII) is a light-driven water:plastoquinone oxidoreductase that uses light energy to abstract electrons from H(2)O, generating O(2) and a proton gradient subsequently used for ATP formation. It consists of a core antenna complex that captures photons, and an electron transfer chain that converts photonic excitation into a charge separation. The D1/D2 (PsbA/PsbD) reaction center heterodimer binds P680, the primary electron donor of PSII as well as several subsequent electron acceptors. In Synechococcus sp. (strain JA-2-3B'a(2-13)) (Cyanobacteria bacterium Yellowstone B-Prime), this protein is Photosystem II protein D1 2.